The primary structure comprises 495 residues: Dipeptide and tripeptide permease A (495 aa).

Residues 1-20 (MTTSALNPLRQPKPFYLIFS) are Cytoplasmic-facing. A helical membrane pass occupies residues 21-41 (IEFWERFGFYGLQGILAVYLV). The Periplasmic portion of the chain corresponds to 42-51 (KALGLREADS). A helical membrane pass occupies residues 52–72 (FTLFSSFIALVYGLIAVGGWL). Topologically, residues 73-81 (GDKVLGTKR) are cytoplasmic. Helical transmembrane passes span 82 to 102 (TILL…ASSE) and 103 to 123 (HISL…LFKA). Topologically, residues 124–145 (NPSSLLSKCYEENDPRLDGAFT) are periplasmic. Residues 146-166 (MYYMAINIGSLLSMLATPWLA) traverse the membrane as a helical segment. Over 167–171 (DQFGY) the chain is Cytoplasmic. Residues 172 to 192 (AHAFALSVVGMLITVANFILM) traverse the membrane as a helical segment. Over 193–209 (QGWVKNYGSDADFRTPR) the chain is Periplasmic. Residues 210 to 230 (LSTWLAVLAGVVAACAAAALL) traverse the membrane as a helical segment. At 231–232 (LK) the chain is on the cytoplasmic side. The helical transmembrane segment at 233 to 253 (HEIIANVVLAVLSIGVVGLYV) threads the bilayer. The Periplasmic portion of the chain corresponds to 254 to 266 (KETLLLKGAERKK). The chain crosses the membrane as a helical span at residues 267–287 (MIVAAILMLQATVFFVLYNQM). Topologically, residues 288-312 (PLSLNFFAIHNTEHMLFGIPVQPEQ) are cytoplasmic. The chain crosses the membrane as a helical span at residues 313–333 (FQSLNPFWIMLASPLLALCYN). Over 334–344 (KLGNRLPMPHK) the chain is Periplasmic. A helical membrane pass occupies residues 345–365 (FAIGMVLCAGAFLVLPLGAKY). Topologically, residues 366–375 (ANAQGLVSSN) are cytoplasmic. A helical transmembrane segment spans residues 376–396 (WMVLSYLLQSVGELLISGLGL). Residues 397-409 (AMVAQLVPQRLMG) lie on the Periplasmic side of the membrane. Residues 410 to 430 (FIMGAWFLTSAASSVIAGWVA) form a helical membrane-spanning segment. Residues 431-451 (GLTAAPDNVTNPLATLEIYSR) lie on the Cytoplasmic side of the membrane. A helical transmembrane segment spans residues 452-472 (VFTQIGVVTGVIAVVTIIIAP). The Periplasmic segment spans residues 473 to 495 (WLHRMTLDEKPAHPEHEMALDAR).

The protein belongs to the major facilitator superfamily. Proton-dependent oligopeptide transporter (POT/PTR) (TC 2.A.17) family. DtpA subfamily.

The protein localises to the cell inner membrane. Functionally, proton-dependent permease that transports di- and tripeptides. The protein is Dipeptide and tripeptide permease A of Chromobacterium violaceum (strain ATCC 12472 / DSM 30191 / JCM 1249 / CCUG 213 / NBRC 12614 / NCIMB 9131 / NCTC 9757 / MK).